We begin with the raw amino-acid sequence, 206 residues long: Ribosomal RNA large subunit methyltransferase E (206 aa).

Gly60, Trp62, Asp80, Asp96, and Asp121 together coordinate S-adenosyl-L-methionine. Lys161 (proton acceptor) is an active-site residue.

This sequence belongs to the class I-like SAM-binding methyltransferase superfamily. RNA methyltransferase RlmE family.

The protein localises to the cytoplasm. It carries out the reaction uridine(2552) in 23S rRNA + S-adenosyl-L-methionine = 2'-O-methyluridine(2552) in 23S rRNA + S-adenosyl-L-homocysteine + H(+). Functionally, specifically methylates the uridine in position 2552 of 23S rRNA at the 2'-O position of the ribose in the fully assembled 50S ribosomal subunit. The protein is Ribosomal RNA large subunit methyltransferase E of Nitrosospira multiformis (strain ATCC 25196 / NCIMB 11849 / C 71).